The sequence spans 273 residues: 3-methyl-2-oxobutanoate hydroxymethyltransferase (273 aa).

2 residues coordinate Mg(2+): Asp53 and Asp92. 3-methyl-2-oxobutanoate is bound by residues 53–54 (DS), Asp92, and Lys120. Glu122 serves as a coordination point for Mg(2+). Catalysis depends on Glu189, which acts as the Proton acceptor.

Belongs to the PanB family. Homodecamer; pentamer of dimers. It depends on Mg(2+) as a cofactor.

The protein localises to the cytoplasm. The enzyme catalyses 3-methyl-2-oxobutanoate + (6R)-5,10-methylene-5,6,7,8-tetrahydrofolate + H2O = 2-dehydropantoate + (6S)-5,6,7,8-tetrahydrofolate. The protein operates within cofactor biosynthesis; (R)-pantothenate biosynthesis; (R)-pantoate from 3-methyl-2-oxobutanoate: step 1/2. Catalyzes the reversible reaction in which hydroxymethyl group from 5,10-methylenetetrahydrofolate is transferred onto alpha-ketoisovalerate to form ketopantoate. The polypeptide is 3-methyl-2-oxobutanoate hydroxymethyltransferase (Cupriavidus necator (strain ATCC 17699 / DSM 428 / KCTC 22496 / NCIMB 10442 / H16 / Stanier 337) (Ralstonia eutropha)).